Consider the following 452-residue polypeptide: Tryptophan biosynthesis protein TrpCF (452 aa).

The interval 1 to 256 (MQTVLAKIVA…AAVRRVLLGE (256 aa)) is indole-3-glycerol phosphate synthase. The segment at 257–452 (NKVCGLTRAQ…ASVFQTLRAY (196 aa)) is N-(5'-phosphoribosyl)anthranilate isomerase.

This sequence in the N-terminal section; belongs to the TrpC family. In the C-terminal section; belongs to the TrpF family. As to quaternary structure, monomer.

The catalysed reaction is N-(5-phospho-beta-D-ribosyl)anthranilate = 1-(2-carboxyphenylamino)-1-deoxy-D-ribulose 5-phosphate. The enzyme catalyses 1-(2-carboxyphenylamino)-1-deoxy-D-ribulose 5-phosphate + H(+) = (1S,2R)-1-C-(indol-3-yl)glycerol 3-phosphate + CO2 + H2O. It participates in amino-acid biosynthesis; L-tryptophan biosynthesis; L-tryptophan from chorismate: step 3/5. The protein operates within amino-acid biosynthesis; L-tryptophan biosynthesis; L-tryptophan from chorismate: step 4/5. Its function is as follows. Bifunctional enzyme that catalyzes two sequential steps of tryptophan biosynthetic pathway. The first reaction is catalyzed by the isomerase, coded by the TrpF domain; the second reaction is catalyzed by the synthase, coded by the TrpC domain. This is Tryptophan biosynthesis protein TrpCF (trpC) from Salmonella typhimurium (strain LT2 / SGSC1412 / ATCC 700720).